The primary structure comprises 188 residues: NADH-quinone oxidoreductase subunit I 2 (188 aa).

2 4Fe-4S ferredoxin-type domains span residues 56–88 and 98–127; these read HFLK…VVPY and AKFE…LGQQ. Residues Cys-68, Cys-71, Cys-74, Cys-78, Cys-107, Cys-110, Cys-113, and Cys-117 each contribute to the [4Fe-4S] cluster site.

The protein belongs to the complex I 23 kDa subunit family. As to quaternary structure, NDH-1 is composed of 14 different subunits. Subunits NuoA, H, J, K, L, M, N constitute the membrane sector of the complex. The cofactor is [4Fe-4S] cluster.

Its subcellular location is the cell inner membrane. It carries out the reaction a quinone + NADH + 5 H(+)(in) = a quinol + NAD(+) + 4 H(+)(out). Its function is as follows. NDH-1 shuttles electrons from NADH, via FMN and iron-sulfur (Fe-S) centers, to quinones in the respiratory chain. The immediate electron acceptor for the enzyme in this species is believed to be ubiquinone. Couples the redox reaction to proton translocation (for every two electrons transferred, four hydrogen ions are translocated across the cytoplasmic membrane), and thus conserves the redox energy in a proton gradient. The chain is NADH-quinone oxidoreductase subunit I 2 from Rhizobium etli (strain ATCC 51251 / DSM 11541 / JCM 21823 / NBRC 15573 / CFN 42).